Consider the following 141-residue polypeptide: Nucleoside diphosphate kinase (141 aa).

The ATP site is built by Lys-11, Phe-59, Arg-87, Thr-93, Arg-104, and Asn-114. His-117 serves as the catalytic Pros-phosphohistidine intermediate.

It belongs to the NDK family. In terms of assembly, homotetramer. The cofactor is Mg(2+).

Its subcellular location is the cytoplasm. The enzyme catalyses a 2'-deoxyribonucleoside 5'-diphosphate + ATP = a 2'-deoxyribonucleoside 5'-triphosphate + ADP. The catalysed reaction is a ribonucleoside 5'-diphosphate + ATP = a ribonucleoside 5'-triphosphate + ADP. In terms of biological role, major role in the synthesis of nucleoside triphosphates other than ATP. The ATP gamma phosphate is transferred to the NDP beta phosphate via a ping-pong mechanism, using a phosphorylated active-site intermediate. The polypeptide is Nucleoside diphosphate kinase (Haemophilus influenzae (strain 86-028NP)).